The following is a 1081-amino-acid chain: DNA polymerase delta catalytic subunit (1081 aa).

The tract at residues 1–22 is disordered; that stretch reads MTSKRPGGSSFQPEVKRKRESD. Zn(2+) is bound by residues Cys-981, Cys-984, Cys-998, and Cys-1001. The segment at 981 to 1001 adopts a CysA-type zinc-finger fold; sequence CLGCKSVLPRAESENAVCKHC. [4Fe-4S] cluster contacts are provided by Cys-1030, Cys-1033, Cys-1043, and Cys-1048. The CysB motif signature appears at 1030–1048; the sequence is CQNCAKTMQDKVNCSARDC.

Belongs to the DNA polymerase type-B family. Heterodimer with subunits of 125 kDa and 50 kDa. The 125 kDa subunit contains the polymerase active site and most likely the active site for the 3'-5' exonuclease activity. [4Fe-4S] cluster is required as a cofactor.

It localises to the nucleus. It carries out the reaction DNA(n) + a 2'-deoxyribonucleoside 5'-triphosphate = DNA(n+1) + diphosphate. Possesses two enzymatic activities: DNA synthesis (polymerase) and an exonucleolytic activity that degrades single stranded DNA in the 3'- to 5'-direction. Required with its accessory proteins (proliferating cell nuclear antigen (PCNA) and replication factor C (RFC) or activator 1) for leading strand synthesis. Also involved in completing Okazaki fragments initiated by the DNA polymerase alpha/primase complex. The chain is DNA polymerase delta catalytic subunit from Caenorhabditis elegans.